Consider the following 180-residue polypeptide: Translation initiation factor IF-3 (180 aa).

Belongs to the IF-3 family. In terms of assembly, monomer.

It localises to the cytoplasm. Functionally, IF-3 binds to the 30S ribosomal subunit and shifts the equilibrium between 70S ribosomes and their 50S and 30S subunits in favor of the free subunits, thus enhancing the availability of 30S subunits on which protein synthesis initiation begins. This chain is Translation initiation factor IF-3, found in Caldanaerobacter subterraneus subsp. tengcongensis (strain DSM 15242 / JCM 11007 / NBRC 100824 / MB4) (Thermoanaerobacter tengcongensis).